Reading from the N-terminus, the 2506-residue chain is Highly reducing polyketide synthase rstn3 (2506 aa).

The Ketosynthase family 3 (KS3) domain occupies 8 to 436; it reads VEPIAIVGMA…GANAHAILDA (429 aa). Catalysis depends on for beta-ketoacyl synthase activity residues Cys-183, His-318, and His-358. Residues 547–875 enclose the Malonyl-CoA:ACP transacylase (MAT) domain; sequence FIFTGQGAQW…KMVGSLFLSG (329 aa). The tract at residues 941-1050 is N-terminal hotdog fold; the sequence is HDLLGSRLPG…ASDQSISSVE (110 aa). The region spanning 941–1212 is the PKS/mFAS DH domain; the sequence is HDLLGSRLPG…FSSLETAVGE (272 aa). Catalysis depends on His-973, which acts as the Proton acceptor; for dehydratase activity. A C-terminal hotdog fold region spans residues 1060–1212; it reads NKDSYDRRWY…FSSLETAVGE (153 aa). Catalysis depends on Asp-1125, which acts as the Proton donor; for dehydratase activity. The tract at residues 1263 to 1563 is methyltransferase (CMet) domain; it reads VTRLAIRSSA…SGADIVLDDY (301 aa). Residues 1827–2093 form the Enoyl reductase (ER) domain; sequence GRVDSFYFKE…QDDYVGRVVL (267 aa). The 181-residue stretch at 2116–2296 folds into the Ketoreductase (KR) domain; the sequence is ASYLLIGCLG…QATSIALGMI (181 aa). Residues 2423 to 2501 form the Carrier domain; it reads AVKVTTLGLI…DLAEKVVALA (79 aa). At Ser-2460 the chain carries O-(pantetheine 4'-phosphoryl)serine.

Pantetheine 4'-phosphate serves as cofactor.

It participates in antifungal biosynthesis. Its function is as follows. Highly reducing polyketide synthase; part of the gene cluster that mediates the biosynthesis of the tetrahydropyranyl antifungal agent restricticin that acts as an inhibitor of CYP51 and blocks the ergosterol biosynthesis. The highly reducing polyketide synthase rstn3, the short chain dehydrogenase rstn4, the cyclase rstn5, the FAD-dependent monooxygenase rstn6 and the enoylreductase rstn7 are required to generate the first stable intermediate desmethylrestrictinol. Rstn3 with rstn7 biosynthesize the first polyketide chain intermediate that is reduced by rstn4, followed by epoxidation by rstn6 before 6-endo cyclization via epoxide opening by rstn5 leads to desmethylrestrictinol. The methyltransferase rstn1 then catalyzes the C4 O-methylation of desmethylrestrictinol to produce restrictinol, and the nonribosomal peptide synthetase rstn8 catalyzes the C3 esterification of restrictinol with glycine that leads to restricticin. This is Highly reducing polyketide synthase rstn3 from Aspergillus nomiae NRRL (strain ATCC 15546 / NRRL 13137 / CBS 260.88 / M93).